Here is a 141-residue protein sequence, read N- to C-terminus: Acetyltransferase YpeA (141 aa).

One can recognise an N-acetyltransferase domain in the interval 1-141 (MEIRVFRQED…GKRLIEDEEY (141 aa)).

Belongs to the acetyltransferase family. YpeA subfamily.

The chain is Acetyltransferase YpeA from Escherichia coli O157:H7.